Reading from the N-terminus, the 377-residue chain is Caspase-4 (377 aa).

The required for LPS-binding stretch occupies residues M1 to D59. A propeptide spanning residues M1 to D80 is cleaved from the precursor. The CARD domain occupies M1 to N91. Residue A2 is modified to N-acetylalanine. S83 carries the post-translational modification Phosphoserine. A disordered region spans residues P84 to D104. Residues H210 and C258 contribute to the active site. Residues S271–D289 constitute a propeptide that is removed on maturation. R314 carries the (Microbial infection) ADP-riboxanated arginine modification.

The protein belongs to the peptidase C14A family. As to quaternary structure, heterotetramer that consists of two anti-parallel arranged heterodimers, each one formed by a 20 kDa (Caspase-4 subunit p20) and a 10 kDa (Caspase-4 subunit p10) subunit. Upon direct LPS-binding, forms large homooligomers, resulting in its activation. These oligomers are often referred to as 'non-canonical inflammasomes'. In its precursor form, interacts with TMEM214; this interaction is required for association with the endoplasmic reticulum membrane. Interacts with CASP1. Interacts with NOD2. Interacts with SERPINB1; this interaction regulates CASP4 activity. In terms of assembly, heterotetramer that consists of two anti-parallel arranged heterodimers, each one formed by a 20 kDa (Caspase-4 subunit p20) and a 10 kDa (Caspase-4 subunit p10) subunit. (Microbial infection) Interacts with NleF protein from pathogenic E.coli; this interaction leads to enzyme inhibition. As to quaternary structure, (Microbial infection) Interacts with cathepsin CTSG; the interaction is promoted by the Td92 surface protein of the periodontal pathogen T.denticola and leads to CASP4 activation. Post-translationally, in response to activation signals, undergoes autoproteolytic cleavage and activation. In terms of processing, (Microbial infection) ADP-riboxanation by S.flexneri OspC3 blocks CASP4 autoprocessing, preventing CASP4 activation and ability to recognize and cleave GSDMD, thereby thwarting the inflammasome/pyroptosis-mediated defense. Widely expressed, including in keratinocytes and colonic and small intestinal epithelial cells (at protein level). Not detected in brain.

The protein resides in the cytoplasm. It localises to the cytosol. It is found in the endoplasmic reticulum membrane. The protein localises to the mitochondrion. Its subcellular location is the inflammasome. The protein resides in the secreted. The enzyme catalyses Strict requirement for Asp at the P1 position. It has a preferred cleavage sequence of Tyr-Val-Ala-Asp-|- but also cleaves at Asp-Glu-Val-Asp-|-.. Activated by homooligomerization induced by direct binding to cytosolic LPS, in a TLR4-independent manner. In addition to LPS, CASP4/CASP11 may also be activated by oxidized phospholipid 1-palmitoyl-2-arachidonoyl- sn-glycero-3-phosphorylcholine, an oxidized phospholipid (oxPAPC), in dendritic cells, promoting adaptive immunity. The role of oxPAPC is however unclear and another report suggests that oxPAPC competes with LPS-binding and inhibits the non-canonical inflammasome in macrophages. Inflammatory caspase that acts as the effector of the non-canonical inflammasome by mediating lipopolysaccharide (LPS)-induced pyroptosis. Also indirectly activates the NLRP3 and NLRP6 inflammasomes. Acts as a thiol protease that cleaves a tetrapeptide after an Asp residue at position P1: catalyzes cleavage of CGAS, GSDMD and IL18. Effector of the non-canonical inflammasome independently of NLRP3 inflammasome and CASP1: the non-canonical inflammasome promotes pyroptosis through GSDMD cleavage without involving secretion of cytokine IL1B. In the non-canonical inflammasome, CASP4 is activated by direct binding to the lipid A moiety of LPS without the need of an upstream sensor. LPS-binding promotes CASP4 activation and CASP4-mediated cleavage of GSDMD and IL18, followed by IL18 secretion through the GSDMD pore, pyroptosis of infected cells and their extrusion into the gut lumen. Also indirectly promotes secretion of mature cytokines (IL1A and HMGB1) downstream of GSDMD-mediated pyroptosis via activation of the NLRP3 and NLRP6 inflammasomes. Involved in NLRP3-dependent CASP1 activation and IL1B secretion in response to non-canonical activators, such as UVB radiation or cholera enterotoxin. Involved in NLRP6 inflammasome-dependent activation in response to lipoteichoic acid (LTA), a cell-wall component of Gram-positive bacteria, which leads to CASP1 activation and IL1B secretion. Involved in LPS-induced IL6 secretion; this activity may not require caspase enzymatic activity. The non-canonical inflammasome is required for innate immunity to cytosolic, but not vacuolar, bacteria. Plays a crucial role in the restriction of S.typhimurium replication in colonic epithelial cells during infection. Activation of the non-canonical inflammasome in brain endothelial cells can lead to excessive pyroptosis, leading to blood-brain barrier breakdown. Pyroptosis limits bacterial replication, while cytokine secretion promotes the recruitment and activation of immune cells and triggers mucosal inflammation. May also act as an activator of adaptive immunity in dendritic cells, following activation by oxidized phospholipid 1-palmitoyl-2-arachidonoyl- sn-glycero-3-phosphorylcholine, an oxidized phospholipid (oxPAPC). Involved in cell death induced by endoplasmic reticulum stress and by treatment with cytotoxic APP peptides found in Alzheimer's patient brains. Cleavage of GSDMD is not strictly dependent on the consensus cleavage site but depends on an exosite interface on CASP4 that recognizes and binds the Gasdermin-D, C-terminal (GSDMD-CT) part. Catalyzes cleavage and maturation of IL18; IL18 processing also depends of the exosite interface on CASP4. In contrast, it does not directly process IL1B. During non-canonical inflammasome activation, cuts CGAS and may play a role in the regulation of antiviral innate immune activation. In terms of biological role, (Microbial infection) In response to the Td92 surface protein of the periodontal pathogen T.denticola, activated by cathepsin CTSG which leads to production and secretion of IL1A and pyroptosis of gingival fibroblasts. In Homo sapiens (Human), this protein is Caspase-4.